Consider the following 352-residue polypeptide: MSYERERYIAELAVQRATILTQKVFNEKAKGTVSKDDKSPVTIGDFGAQALIIQAIRKNFPNDEIVAEEEASTLREDKALSAEIWRLVKDIKLEDAESNELLGGSLPSEEAMLDIIDEGKSAGGPKGRIWALDPIDGTKGFLRGGQYAVCLGLLEDGDVKVGAIGCPNLPVDDAATISSSIGVDQNSGAGNGVLFSAIKGAGSVSRPLTSGARAESKSISMRPVPDIAQAVFCEGVEAGHSAQGDNAAVAQLLGITSPSVRLDSQAKYCSIARGAGDIYLRLPVKKDYQEKIWDHAAGDLIVREAGGQVTDIYGQTLDFSKGRTLAANKGVVAAPKAIQDEVISAVKKVLKL.

D45 serves as the catalytic Proton acceptor. Residues E68, D133, I135, and D136 each coordinate Mg(2+). Residue T138 is the Proton acceptor of the active site. Positions 138, 240, 264, 267, 281, and 294 each coordinate adenosine 3',5'-bisphosphate. Positions 240, 264, 267, 281, and 294 each coordinate AMP. D294 contributes to the Mg(2+) binding site.

This sequence belongs to the inositol monophosphatase superfamily. Requires Mg(2+) as cofactor.

The enzyme catalyses 3'-phosphoadenylyl sulfate + H2O = adenosine 5'-phosphosulfate + phosphate. It catalyses the reaction adenosine 3',5'-bisphosphate + H2O = AMP + phosphate. The catalysed reaction is adenosine 2',5'-bisphosphate + H2O = AMP + phosphate. In terms of biological role, phosphatase that converts adenosine 3'-phosphate 5'-phosphosulfate (PAPS) to adenosine 5'-phosphosulfate (APS) and 3'(2')-phosphoadenosine 5'-phosphate (PAP) to AMP. May regulate the flux of sulfur in the sulfur-activation pathway by converting PAPS to APS. Involved in osmoadaptation. This Emericella nidulans (strain FGSC A4 / ATCC 38163 / CBS 112.46 / NRRL 194 / M139) (Aspergillus nidulans) protein is 3'(2'),5'-bisphosphate nucleotidase.